Here is a 307-residue protein sequence, read N- to C-terminus: Protoheme IX farnesyltransferase (307 aa).

Helical transmembrane passes span 24-44, 52-72, 115-135, 152-172, 179-199, 224-244, 245-265, and 284-304; these read ISLL…VGLV, PVIA…AGAL, VVLG…TIFF, IVIG…AASG, VILV…LSLY, QILL…MLGE, AGLA…LLAV, and FGFS…EALV.

Belongs to the UbiA prenyltransferase family. Protoheme IX farnesyltransferase subfamily.

It localises to the cell inner membrane. The catalysed reaction is heme b + (2E,6E)-farnesyl diphosphate + H2O = Fe(II)-heme o + diphosphate. The protein operates within porphyrin-containing compound metabolism; heme O biosynthesis; heme O from protoheme: step 1/1. Its function is as follows. Converts heme B (protoheme IX) to heme O by substitution of the vinyl group on carbon 2 of heme B porphyrin ring with a hydroxyethyl farnesyl side group. The sequence is that of Protoheme IX farnesyltransferase from Azorhizobium caulinodans (strain ATCC 43989 / DSM 5975 / JCM 20966 / LMG 6465 / NBRC 14845 / NCIMB 13405 / ORS 571).